We begin with the raw amino-acid sequence, 90 residues long: Putative membrane protein insertion efficiency factor (90 aa).

Belongs to the UPF0161 family.

It is found in the cell inner membrane. Its function is as follows. Could be involved in insertion of integral membrane proteins into the membrane. The sequence is that of Putative membrane protein insertion efficiency factor from Thermosynechococcus vestitus (strain NIES-2133 / IAM M-273 / BP-1).